The primary structure comprises 97 residues: Large ribosomal subunit protein uL23 (97 aa).

The protein belongs to the universal ribosomal protein uL23 family. In terms of assembly, part of the 50S ribosomal subunit. Contacts protein L29, and trigger factor when it is bound to the ribosome.

Its function is as follows. One of the early assembly proteins it binds 23S rRNA. One of the proteins that surrounds the polypeptide exit tunnel on the outside of the ribosome. Forms the main docking site for trigger factor binding to the ribosome. The chain is Large ribosomal subunit protein uL23 from Sulfurihydrogenibium sp. (strain YO3AOP1).